The primary structure comprises 443 residues: Protein FAM83A (443 aa).

The interval Asp-311–Ser-403 is disordered. Residues Ser-315–Asn-326 are compositionally biased toward polar residues. Low complexity-rich tracts occupy residues Thr-327–Ser-344 and Ser-388–Tyr-399.

It belongs to the FAM83 family.

The protein localises to the cytoplasm. In terms of biological role, may function in the epidermal growth factor receptor/EGFR signaling pathway. The polypeptide is Protein FAM83A (Xenopus laevis (African clawed frog)).